A 674-amino-acid chain; its full sequence is Translation initiation factor IF-2 (674 aa).

The tr-type G domain maps to 174–344; it reads IRPPVVTVMG…LLVAELREIK (171 aa). Residues 183-190 are G1; that stretch reads GHVDHGKT. 183-190 lines the GTP pocket; the sequence is GHVDHGKT. The G2 stretch occupies residues 208-212; it reads GITQS. The tract at residues 229–232 is G3; that stretch reads DTPG. GTP-binding positions include 229–233 and 283–286; these read DTPGH and NKID. A G4 region spans residues 283–286; that stretch reads NKID. The interval 320–322 is G5; sequence SAR.

It belongs to the TRAFAC class translation factor GTPase superfamily. Classic translation factor GTPase family. IF-2 subfamily.

The protein resides in the cytoplasm. Functionally, one of the essential components for the initiation of protein synthesis. Protects formylmethionyl-tRNA from spontaneous hydrolysis and promotes its binding to the 30S ribosomal subunits. Also involved in the hydrolysis of GTP during the formation of the 70S ribosomal complex. The protein is Translation initiation factor IF-2 of Pseudothermotoga lettingae (strain ATCC BAA-301 / DSM 14385 / NBRC 107922 / TMO) (Thermotoga lettingae).